The chain runs to 339 residues: MTVRVAINGFGRIGRNVVRALYESGRRAEITVVAINELADAAGMAHLLKYDTSHGRFAWEVRQERDQLFVGDDAIRVLHERSLQSLPWRELGVDVVLDCTGVYGSREHGEAHIAAGAKKVLFSHPGSNDLDATVVYGVNQDQLRAEHRIVSNASCTTNCIIPVIKLLDDAYGIESGTVTTIHSAMHDQQVIDAYHPDLRRTRAASQSIIPVDTKLAAGITRFFPQFNDRFEAIAVRVPTINVTAIDLSVTVKKPVKANEVNLLLQKAAQGAFHGIVDYTELPLVSVDFNHDPHSAIVDGTQTRVSGAHLIKTLVWCDNEWGFANRMLDTTLAMATVAFR.

Residues 12–13 and Arg81 contribute to the NAD(+) site; that span reads RI. Substrate-binding positions include 154 to 156, Arg200, 213 to 214, and Arg236; these read SCT and TK. The active-site Nucleophile is the Cys155. Asn318 provides a ligand contact to NAD(+).

As to quaternary structure, homotetramer.

It is found in the cytoplasm. It carries out the reaction D-erythrose 4-phosphate + NAD(+) + H2O = 4-phospho-D-erythronate + NADH + 2 H(+). Its pathway is cofactor biosynthesis; pyridoxine 5'-phosphate biosynthesis; pyridoxine 5'-phosphate from D-erythrose 4-phosphate: step 1/5. Functionally, catalyzes the NAD-dependent conversion of D-erythrose 4-phosphate to 4-phosphoerythronate. This chain is D-erythrose-4-phosphate dehydrogenase (epd), found in Escherichia coli (strain K12).